The chain runs to 441 residues: Alpha-monoglucosyldiacylglycerol synthase (441 aa).

Belongs to the glycosyltransferase group 1 family. Glycosyltransferase 4 subfamily. The cofactor is Mg(2+).

It localises to the cell membrane. The catalysed reaction is a 1,2-diacyl-sn-glycerol + UDP-alpha-D-glucose = a 1,2-diacyl-3-O-(alpha-D-glucopyranosyl)-sn-glycerol + UDP + H(+). Activated by the negatively charged lipid phosphatidylglycerol (PG). Glucosyltransferase involved in the biosynthesis of the non-bilayer-prone membrane lipid alpha-monoglucosyldiacylglycerol. This is a major component for maintaining a certain anionic lipid surface charge density, for balancing the bilayer to non-bilayer phase equilibria and for keeping a constant lipid bilayer spontaneous curvature (curvature packing stress). Catalyzes the transfer of a glucosyl residue from UDP-Glc to diacylglycerol (DAG) acceptor to form the corresponding alpha-glucosyl-DAG (1,2-diacyl-3-O-(alpha-D-glucopyranosyl)-sn-glycerol). It can only use UDP-Glc as sugar donor. This chain is Alpha-monoglucosyldiacylglycerol synthase, found in Streptococcus pneumoniae (strain ATCC BAA-255 / R6).